A 586-amino-acid polypeptide reads, in one-letter code: MKYILVTGGVISGIGKGIIASSIGTILKSCGLRVTAIKIDPYINIDAGTFSPYEHGEVFVLNDGGEVDLDLGNYERFLDINLYKDNNITTGKIYQHVINKERRGDYLGKTVQVVPHITDAIQEWVMNQAKVSVDGNKEDPQICVIELGGTIGDIEGMAFVEAFRQFQFKAKKENFYNIHVSLVPQPSATGEQKTKPTQNSVRALRGLGLSPDLIVCRSSTPIEMAVKEKISMFCHVNPEQVICIHDVSSIYRVPLLLEEQGVVKYFQERLGLPINDCSSNLLFKWKAMADRYERLQKICSIALVGKYTKLRDCYASVFKALEHSALAINHKLNLMYIDSIDLEPVTKAEDPVKFHEAWQKLCLADGILVPGGFGIRGTLGKLQAISWARTKKIPFLGICLGMQLAVIEFARNCLNLKDANSTEFEPNTPVPLVIDMPEHNPGDLGGTMRLGLRRTVFTTENSILKKLYGDVPYIEERHRHRYEVNPNLINQFENKDLCFVGEDVDGKRMEIVELTSHPYFIGVQFHPEFSSRPMKPSPPYLGLLLAATGNLNAHLQQMNKLPYSDGYSDASDDSFPEAKLAELDLN.

In terms of domain architecture, Glutamine amidotransferase type-1 spans 300–554 (SIALVGKYTK…LAATGNLNAH (255 aa)). Active-site for GATase activity residues include cysteine 399, histidine 526, and glutamate 528. Residues serine 568, serine 571, and serine 574 each carry the phosphoserine modification.

This sequence belongs to the CTP synthase family.

The enzyme catalyses UTP + L-glutamine + ATP + H2O = CTP + L-glutamate + ADP + phosphate + 2 H(+). It participates in pyrimidine metabolism; CTP biosynthesis via de novo pathway; CTP from UDP: step 2/2. Catalyzes the ATP-dependent amination of UTP to CTP with either L-glutamine or ammonia as the source of nitrogen. Constitutes the rate-limiting enzyme in the synthesis of cytosine nucleotides. The sequence is that of CTP synthase 2 (Ctps2) from Mus musculus (Mouse).